The sequence spans 58 residues: UPF0509 protein YciZ (58 aa).

This sequence belongs to the UPF0509 family.

In Escherichia fergusonii (strain ATCC 35469 / DSM 13698 / CCUG 18766 / IAM 14443 / JCM 21226 / LMG 7866 / NBRC 102419 / NCTC 12128 / CDC 0568-73), this protein is UPF0509 protein YciZ.